Here is a 330-residue protein sequence, read N- to C-terminus: Cathepsin S (330 aa).

Positions 1–17 (MKQLVCVLFVCSSAVTQ) are cleaved as a signal peptide. Positions 18 to 114 (LHKDPTLDHH…ITYKSNPNQM (97 aa)) are cleaved as a propeptide — activation peptide. N104 carries N-linked (GlcNAc...) asparagine glycosylation. 4 disulfide bridges follow: C126-C223, C136-C179, C170-C212, and C271-C319. Residue C139 is part of the active site. Catalysis depends on residues H277 and N297.

It belongs to the peptidase C1 family.

Its subcellular location is the lysosome. It localises to the secreted. The protein localises to the cytoplasmic vesicle. The protein resides in the phagosome. It catalyses the reaction Similar to cathepsin L, but with much less activity on Z-Phe-Arg-|-NHMec, and more activity on the Z-Val-Val-Arg-|-Xaa compound.. Thiol protease. Key protease responsible for the removal of the invariant chain from MHC class II molecules and MHC class II antigen presentation. The bond-specificity of this proteinase is in part similar to the specificities of cathepsin L. In Saimiri boliviensis boliviensis (Bolivian squirrel monkey), this protein is Cathepsin S (CTSS).